A 1248-amino-acid chain; its full sequence is MQSLSDIPPSIYLFSCPNCGRSISTYRLLLGSVCNICLEEDKEYKNIGDLIKDIEKQGNLIKLKDIQRVLDDYESFVSVFRRLLGFPPFGPQKSWIYRLLSGESFAIIAPPGLGKTTFGLISSIYLYLRGKKSILVFPTKSLVRQAIDKLSSYIQNLAEIKENPPKVIYYYSGMSASERKEADEGLQSKTFDIFISTNRFLIDNIDQISSTSYQFLFVDDVDTALKSSKSAQAILKLLGFTPSDQDKIKESLKKYRENTQKNEQNEYIFEEIDKIRKDRLASKTVIFSSATLNRSNPILTSLVGFKPGSSVIYIRKVYDMYVKQPDKEQETFNLIKSLLHRLGDGGLIFVPVDKKQEYIKRLQSELSNEFNVAAITSTSATKIDDFANGEIDVLIGSATHYGILVRGLDLPWRVKYSIFVGIPKFKFRLGEKVNLLTLSRLLSLIALITKDQEVIYISRRVKDKIRRLSPAALTMLSVQAKEGKLEDSILLKAYDLLNKYLSNQNVLKRISEIGDFVLSPDNDILIPDYLTYVQASGRTSRIYAGDVTTGLSILLVDDFNLFRLLNKKLQYILDDIQWRELDVEKWTAGDVEIKNLISKINEERNEISKLKNEGNVAPALQKVKTVLLVVESPNKAKTISSFFSRPSIRQIGNMRVYETVLGDKVLMVTASGGHVYDLTTQDMGIYGVDIMKQNSSLVFIPIYNSIKKCENNHQFTDFFESNKCPRCMTTKVRYDSLKSINVLRNLAVEADEVLIGTDPDTEGEKIAWDLYLALRPYNSNIRRAEFHEVTRKAILQAINQPREFNVNLVKSQLVRRIEDRWIGFKLSSILQTRFWPEYCKSLSSNKQLNCNENKNLSAGRVQTPVLSWIVDRYTEYQRNKSRVYYGKIDQLQDIVIYVPKQDGVRKNSKIVVVFNEINQLEEEFGPLPPYTTDTLLSDSNNFFGLSAPETMRIAQDLFELGLITYHRTDSNRISNTGISVAENYLKDVLGDKYTNIFKPRSWGDGGAHEGIRPTKPIDVEQLRLLIEEGELELAKRLTNNHFKVYDIIFRRFISSQIIPLKVRKEIVKIELYGENKKEKINSNQNIIEVITGITLPGIDTEISKFAYVPVRNVSRSVAERLKELGRSIPTDFSIEISNSFIKSTVNLYTQADLVMEMKNKKIGRPSTYATIIGTILRRGYVLESLKTKKLIPTRLGVEVNKYLNENYGRFVSEDRTRKLLQLMDMVEAGQEKYEEVLKQVYEEINEIR.

The segment at 7–44 (IPPSIYLFSCPNCGRSISTYRLLLGSVCNICLEEDKEY) adopts an RG N-terminal-type zinc-finger fold. Zn(2+) is bound by residues C16, C19, C34, and C37. ATP-binding positions include Q92 and 109-116 (APPGLGKT). A Helicase ATP-binding domain is found at 96 to 262 (IYRLLSGESF…KKYRENTQKN (167 aa)). The short motif at 219-222 (DDVD) is the DEAD box element. Residues 621-1248 (QKVKTVLLVV…QVYEEINEIR (628 aa)) are topoisomerase I. Positions 625–789 (TVLLVVESPN…NIRRAEFHEV (165 aa)) constitute a Toprim domain. E631 contacts Mg(2+). Residues 706–735 (IKKCENNHQFTDFFESNKCPRCMTTKVRYD) form an RG C-terminal-type; atypical zinc finger. C709, H713, C724, and C727 together coordinate Zn(2+). A Mg(2+)-binding site is contributed by D758. The region spanning 805 to 1248 (NVNLVKSQLV…QVYEEINEIR (444 aa)) is the Topo IA-type catalytic domain. The active-site O-(5'-phospho-DNA)-tyrosine intermediate is Y965.

It in the N-terminal section; belongs to the DEAD box helicase family. DDVD subfamily. This sequence in the C-terminal section; belongs to the type IA topoisomerase family. Monomer. It depends on Zn(2+) as a cofactor. The cofactor is Mg(2+). Post-translationally, the N-terminus is blocked.

The protein resides in the cytoplasm. The catalysed reaction is ATP + H2O = ADP + phosphate + H(+). In terms of biological role, modifies the topological state of DNA by introducing positive supercoils in an ATP-dependent process. Increases the linking number in steps of +1. Has a DNA-stimulated ATPase activity; closed circular ssDNA stimulates ATPase much better than dsDNA although negative supercoiled, positive supercoiled and relaxed dsDNA all stimulate ATPase activity. All NTPs permit topoisomerization (relaxation) of negatively supercoiled dsDNA without nucleotide hydrolysis. It transiently cleaves a single DNA strand and remains covalently bound to the 5' DNA end. Acts via a tyrosine residue. Reverse gyrase binds and unwinds DNA independently of ATP binding and DNA cleavage. May be involved in rewinding the DNA strands in the regions of the chromosome that have opened up to allow transcription or replication, probably acts via ssDNA regions of the chromosome. The sequence is that of Reverse gyrase 1 from Sulfolobus acidocaldarius (strain ATCC 33909 / DSM 639 / JCM 8929 / NBRC 15157 / NCIMB 11770).